The sequence spans 201 residues: Small ribosomal subunit protein uS4c (201 aa).

Positions 89 to 150 (MRLDNILFRL…KERSKALIQN (62 aa)) constitute an S4 RNA-binding domain.

The protein belongs to the universal ribosomal protein uS4 family. As to quaternary structure, part of the 30S ribosomal subunit. Contacts protein S5. The interaction surface between S4 and S5 is involved in control of translational fidelity.

Its subcellular location is the plastid. The protein resides in the chloroplast. In terms of biological role, one of the primary rRNA binding proteins, it binds directly to 16S rRNA where it nucleates assembly of the body of the 30S subunit. With S5 and S12 plays an important role in translational accuracy. This Phalaenopsis aphrodite subsp. formosana (Moth orchid) protein is Small ribosomal subunit protein uS4c (rps4).